The primary structure comprises 298 residues: NAD kinase (298 aa).

Asp80 functions as the Proton acceptor in the catalytic mechanism. Residues 80-81 (DG), 154-155 (ND), Arg182, Asp184, 195-200 (TAYALS), Ala219, and Gln253 each bind NAD(+).

The protein belongs to the NAD kinase family. Requires a divalent metal cation as cofactor.

The protein resides in the cytoplasm. It carries out the reaction NAD(+) + ATP = ADP + NADP(+) + H(+). Functionally, involved in the regulation of the intracellular balance of NAD and NADP, and is a key enzyme in the biosynthesis of NADP. Catalyzes specifically the phosphorylation on 2'-hydroxyl of the adenosine moiety of NAD to yield NADP. This Acidovorax sp. (strain JS42) protein is NAD kinase.